The primary structure comprises 561 residues: Arginine--tRNA ligase (561 aa).

The 'HIGH' region motif lies at 128–138 (ANPTGPLHVGH).

Belongs to the class-I aminoacyl-tRNA synthetase family. In terms of assembly, monomer.

It is found in the cytoplasm. The catalysed reaction is tRNA(Arg) + L-arginine + ATP = L-arginyl-tRNA(Arg) + AMP + diphosphate. This is Arginine--tRNA ligase from Leptothrix cholodnii (strain ATCC 51168 / LMG 8142 / SP-6) (Leptothrix discophora (strain SP-6)).